The sequence spans 374 residues: DNA-directed RNA polymerase subunit alpha (374 aa).

An alpha N-terminal domain (alpha-NTD) region spans residues 1–257; that stretch reads MSDNAHNLLY…KHFSIFENMD (257 aa). The tract at residues 274-374 is alpha C-terminal domain (alpha-CTD); the sequence is KDDILHKLIL…EKIRAKNIKG (101 aa).

It belongs to the RNA polymerase alpha chain family. Homodimer. The RNAP catalytic core consists of 2 alpha, 1 beta, 1 beta' and 1 omega subunit. When a sigma factor is associated with the core the holoenzyme is formed, which can initiate transcription.

The catalysed reaction is RNA(n) + a ribonucleoside 5'-triphosphate = RNA(n+1) + diphosphate. Its function is as follows. DNA-dependent RNA polymerase catalyzes the transcription of DNA into RNA using the four ribonucleoside triphosphates as substrates. This Chlamydia pneumoniae (Chlamydophila pneumoniae) protein is DNA-directed RNA polymerase subunit alpha.